A 212-amino-acid chain; its full sequence is Cytochrome c biogenesis ATP-binding export protein CcmA (212 aa).

The ABC transporter domain maps to 7–209 (LSLQNLSCQR…HLQKLNLAAY (203 aa)). Residue 39–46 (GHNGIGKT) participates in ATP binding.

Belongs to the ABC transporter superfamily. CcmA exporter (TC 3.A.1.107) family. As to quaternary structure, the complex is composed of two ATP-binding proteins (CcmA) and two transmembrane proteins (CcmB).

Its subcellular location is the cell inner membrane. It catalyses the reaction heme b(in) + ATP + H2O = heme b(out) + ADP + phosphate + H(+). In terms of biological role, part of the ABC transporter complex CcmAB involved in the biogenesis of c-type cytochromes; once thought to export heme, this seems not to be the case, but its exact role is uncertain. Responsible for energy coupling to the transport system. The polypeptide is Cytochrome c biogenesis ATP-binding export protein CcmA (Haemophilus influenzae (strain ATCC 51907 / DSM 11121 / KW20 / Rd)).